A 317-amino-acid chain; its full sequence is Phospho-N-acetylmuramoyl-pentapeptide-transferase (317 aa).

Transmembrane regions (helical) follow at residues 3 to 23 (VIIYSVLISFLFSILQGPLFI), 48 to 68 (GTPTMGGIIFITTAIIAMIIM), 72 to 92 (LNSNAVFAFVCFFSFAMIGLI), 112 to 132 (FLLQIIVSAAISYYAYIRFGS), 141 to 161 (ITWTLPPIVYMAAVVFYFVAV), 171 to 191 (LDGLASSVTILVVTFFTVVSF), 193 to 213 (WHQYELSVFCGIIVGILLGFL), 238 to 258 (AIALVLKLPLLVIIVGGIYVI), and 297 to 317 (VVSVFSIVTVILCLIAFLSLI).

It belongs to the glycosyltransferase 4 family. MraY subfamily. Mg(2+) is required as a cofactor.

It is found in the cell membrane. It catalyses the reaction UDP-N-acetyl-alpha-D-muramoyl-L-alanyl-gamma-D-glutamyl-meso-2,6-diaminopimeloyl-D-alanyl-D-alanine + di-trans,octa-cis-undecaprenyl phosphate = di-trans,octa-cis-undecaprenyl diphospho-N-acetyl-alpha-D-muramoyl-L-alanyl-D-glutamyl-meso-2,6-diaminopimeloyl-D-alanyl-D-alanine + UMP. The protein operates within cell wall biogenesis; peptidoglycan biosynthesis. In terms of biological role, catalyzes the initial step of the lipid cycle reactions in the biosynthesis of the cell wall peptidoglycan: transfers peptidoglycan precursor phospho-MurNAc-pentapeptide from UDP-MurNAc-pentapeptide onto the lipid carrier undecaprenyl phosphate, yielding undecaprenyl-pyrophosphoryl-MurNAc-pentapeptide, known as lipid I. The polypeptide is Phospho-N-acetylmuramoyl-pentapeptide-transferase (Clostridium acetobutylicum (strain ATCC 824 / DSM 792 / JCM 1419 / IAM 19013 / LMG 5710 / NBRC 13948 / NRRL B-527 / VKM B-1787 / 2291 / W)).